Reading from the N-terminus, the 365-residue chain is Galactoside alpha-(1,2)-fucosyltransferase 1 (365 aa).

Topologically, residues 1–8 (MWLRSHRQ) are cytoplasmic. The chain crosses the membrane as a helical; Signal-anchor for type II membrane protein span at residues 9–25 (LCLAFLLVCVLSVIFFL). Residues 26 to 365 (HIHQDSFPHG…LSPLWTLAKP (340 aa)) lie on the Lumenal side of the membrane. N65 and N327 each carry an N-linked (GlcNAc...) asparagine glycan.

The protein belongs to the glycosyltransferase 11 family.

Its subcellular location is the golgi apparatus. It localises to the golgi stack membrane. It catalyses the reaction a beta-D-galactosyl-(1-&gt;4)-N-acetyl-beta-D-glucosaminyl derivative + GDP-beta-L-fucose = an alpha-L-Fuc-(1-&gt;2)-beta-D-Gal-(1-&gt;4)-beta-D-GlcNAc derivative + GDP + H(+). It carries out the reaction a ganglioside GA1 + GDP-beta-L-fucose = a ganglioside Fuc-GA1 + GDP + H(+). The enzyme catalyses a beta-D-Gal-(1-&gt;3)-beta-D-GlcNAc-(1-&gt;3)-beta-D-Gal-(1-&gt;4)-beta-D-Glc-(1&lt;-&gt;1')-Cer(d18:1(4E)) + GDP-beta-L-fucose = alpha-L-fucosyl-(1-&gt;2)- beta-D-galactosyl-(1-&gt;3)-N-acetyl-beta-D-glucosaminyl-(1-&gt;3)-beta-D-galactosyl-(1-&gt;4)-beta-D-glucosyl-(1&lt;-&gt;1')-N-acylsphing-4-enine + GDP + H(+). The catalysed reaction is a neolactoside nLc4Cer(d18:1(4E)) + GDP-beta-L-fucose = a neolactoside IV(2)-alpha-Fuc-nLc4Cer(d18:1(4E)) + GDP + H(+). It catalyses the reaction a ganglioside GM1 + GDP-beta-L-fucose = a ganglioside Fuc-GM1 + GDP + H(+). It carries out the reaction beta-D-galactosyl-(1-&gt;3)-N-acetyl-D-galactosamine + GDP-beta-L-fucose = alpha-L-fucosyl-(1-&gt;2)-beta-D-galactosyl-(1-&gt;3)-N-acetyl-D-galactosamine + GDP + H(+). The protein operates within protein modification; protein glycosylation. Catalyzes the transfer of L-fucose, from a guanosine diphosphate-beta-L-fucose, to the terminal galactose residue of glycoconjugates through an alpha(1,2) linkage leading to H antigen synthesis that is an intermediate substrate in the synthesis of ABO blood group antigens. H antigen is essential for maturation of the glomerular layer of the main olfactory bulb, in cell migration and early cell-cell contacts during tumor associated angiogenesis. Preferentially fucosylates soluble lactose and to a lesser extent fucosylates glycolipids gangliosides GA1 and GM1a. The sequence is that of Galactoside alpha-(1,2)-fucosyltransferase 1 from Homo sapiens (Human).